We begin with the raw amino-acid sequence, 556 residues long: Potassium-transporting ATPase potassium-binding subunit (556 aa).

Transmembrane regions (helical) follow at residues 6–26 (AGIA…VPLG), 65–85 (SVLA…LVQG), 133–153 (GLAV…IALV), 176–196 (LRIL…GGAI), 249–269 (PTPW…FSLP), 283–303 (VAIA…TMLL), 378–398 (GLYG…LMVG), 415–435 (LAAS…AIAM), 483–503 (ALGL…LALA), and 526–546 (FVGM…LPIL).

The protein belongs to the KdpA family. As to quaternary structure, the system is composed of three essential subunits: KdpA, KdpB and KdpC.

The protein localises to the cell membrane. In terms of biological role, part of the high-affinity ATP-driven potassium transport (or Kdp) system, which catalyzes the hydrolysis of ATP coupled with the electrogenic transport of potassium into the cytoplasm. This subunit binds the extracellular potassium ions and delivers the ions to the membrane domain of KdpB through an intramembrane tunnel. This Mycolicibacterium smegmatis (strain ATCC 700084 / mc(2)155) (Mycobacterium smegmatis) protein is Potassium-transporting ATPase potassium-binding subunit.